The following is a 105-amino-acid chain: MATLQQQKIRIRLKAFDRRLLDTSCDRIVETANRTNATAIGPIPLPTRRRIYCVLRSPHVDKDSREHFETRTHRRIIDIYQPSSKTIDALMKLDLPAGVDIEVKL.

Belongs to the universal ribosomal protein uS10 family. In terms of assembly, part of the 30S ribosomal subunit.

In terms of biological role, involved in the binding of tRNA to the ribosomes. In Synechococcus elongatus (strain ATCC 33912 / PCC 7942 / FACHB-805) (Anacystis nidulans R2), this protein is Small ribosomal subunit protein uS10.